The sequence spans 353 residues: tRNA-specific 2-thiouridylase MnmA (353 aa).

Residues 7-14 (GLSGGVDS) and L33 each bind ATP. The active-site Nucleophile is C94. Cysteines 94 and 193 form a disulfide. Residue G119 participates in ATP binding. An interaction with tRNA region spans residues 143–145 (KDQ). Catalysis depends on C193, which acts as the Cysteine persulfide intermediate. The interval 298-299 (RY) is interaction with tRNA.

It belongs to the MnmA/TRMU family.

The protein resides in the cytoplasm. It catalyses the reaction S-sulfanyl-L-cysteinyl-[protein] + uridine(34) in tRNA + AH2 + ATP = 2-thiouridine(34) in tRNA + L-cysteinyl-[protein] + A + AMP + diphosphate + H(+). Its function is as follows. Catalyzes the 2-thiolation of uridine at the wobble position (U34) of tRNA, leading to the formation of s(2)U34. The chain is tRNA-specific 2-thiouridylase MnmA from Picosynechococcus sp. (strain ATCC 27264 / PCC 7002 / PR-6) (Agmenellum quadruplicatum).